The chain runs to 253 residues: Regulatory protein VirG (253 aa).

The Response regulatory domain maps to H15–L129. The residue at position 64 (D64) is a 4-aspartylphosphate. The ompR/PhoB-type DNA-binding region spans R141–A241.

In terms of processing, phosphorylated by wide host range (WHR) VirA protein.

It is found in the cytoplasm. Its function is as follows. VirG is required for the positive regulation of at least two vir loci encoded by the Ti plasmid of A.tumefaciens. In Agrobacterium fabrum (strain C58 / ATCC 33970) (Agrobacterium tumefaciens (strain C58)), this protein is Regulatory protein VirG (virG).